We begin with the raw amino-acid sequence, 153 residues long: Small ribosomal subunit protein bS16 (153 aa).

This sequence belongs to the bacterial ribosomal protein bS16 family.

The protein is Small ribosomal subunit protein bS16 of Leifsonia xyli subsp. xyli (strain CTCB07).